A 419-amino-acid polypeptide reads, in one-letter code: CCA-adding enzyme (419 aa).

Gly-8 and Arg-11 together coordinate ATP. CTP contacts are provided by Gly-8 and Arg-11. Positions 21 and 23 each coordinate Mg(2+). Positions 91, 137, and 140 each coordinate ATP. CTP is bound by residues Arg-91, Arg-137, and Arg-140.

It belongs to the tRNA nucleotidyltransferase/poly(A) polymerase family. Bacterial CCA-adding enzyme type 2 subfamily. Mg(2+) is required as a cofactor.

It catalyses the reaction a tRNA precursor + 2 CTP + ATP = a tRNA with a 3' CCA end + 3 diphosphate. The catalysed reaction is a tRNA with a 3' CCA end + 2 CTP + ATP = a tRNA with a 3' CCACCA end + 3 diphosphate. In terms of biological role, catalyzes the addition and repair of the essential 3'-terminal CCA sequence in tRNAs without using a nucleic acid template. Adds these three nucleotides in the order of C, C, and A to the tRNA nucleotide-73, using CTP and ATP as substrates and producing inorganic pyrophosphate. tRNA 3'-terminal CCA addition is required both for tRNA processing and repair. Also involved in tRNA surveillance by mediating tandem CCA addition to generate a CCACCA at the 3' terminus of unstable tRNAs. While stable tRNAs receive only 3'-terminal CCA, unstable tRNAs are marked with CCACCA and rapidly degraded. The chain is CCA-adding enzyme from Buchnera aphidicola subsp. Baizongia pistaciae (strain Bp).